The primary structure comprises 347 residues: Quinolinate synthase (347 aa).

Iminosuccinate-binding residues include His47 and Ser68. Residue Cys113 coordinates [4Fe-4S] cluster. Residues 139–141 and Ser156 each bind iminosuccinate; that span reads YAN. Cys200 provides a ligand contact to [4Fe-4S] cluster. Iminosuccinate-binding positions include 226–228 and Thr243; that span reads HPE. Cys297 lines the [4Fe-4S] cluster pocket.

Belongs to the quinolinate synthase family. Type 1 subfamily. [4Fe-4S] cluster serves as cofactor.

Its subcellular location is the cytoplasm. The catalysed reaction is iminosuccinate + dihydroxyacetone phosphate = quinolinate + phosphate + 2 H2O + H(+). Its pathway is cofactor biosynthesis; NAD(+) biosynthesis; quinolinate from iminoaspartate: step 1/1. Its function is as follows. Catalyzes the condensation of iminoaspartate with dihydroxyacetone phosphate to form quinolinate. The protein is Quinolinate synthase of Escherichia coli O157:H7.